Consider the following 217-residue polypeptide: Probable GTP-binding protein EngB (217 aa).

The 178-residue stretch at 37-214 (AGVEVAFAGR…RAAMARLIGE (178 aa)) folds into the EngB-type G domain. GTP contacts are provided by residues 45–52 (GRSNVGKS), 72–76 (GRTQE), 92–95 (DMPG), 159–162 (TKAD), and 193–195 (TSS). Positions 52 and 74 each coordinate Mg(2+).

Belongs to the TRAFAC class TrmE-Era-EngA-EngB-Septin-like GTPase superfamily. EngB GTPase family. The cofactor is Mg(2+).

Necessary for normal cell division and for the maintenance of normal septation. This is Probable GTP-binding protein EngB from Nitrobacter hamburgensis (strain DSM 10229 / NCIMB 13809 / X14).